Consider the following 291-residue polypeptide: Neugrin (291 aa).

An N-terminal signal peptide occupies residues 1–15; sequence MAVTLSLLLGGRVCA. 2 disordered regions span residues 26–48 and 155–270; these read GVAG…PEER and GSGN…DNFS. A Phosphoserine modification is found at Ser-41. 2 N-linked (GlcNAc...) asparagine glycosylation sites follow: Asn-158 and Asn-186. Polar residues predominate over residues 236–246; it reads KYSSDSESPRG. The N-linked (GlcNAc...) asparagine glycan is linked to Asn-268.

The protein belongs to the neugrin family. As to quaternary structure, forms a regulatory protein-RNA complex, consisting of RCC1L, NGRN, RPUSD3, RPUSD4, TRUB2, FASTKD2 and 16S mt-rRNA. Interacts with 16S mt-rRNA; this interaction is direct. Expressed at high levels in heart, brain and skeletal muscle. In brain, mainly expressed in neurons rather than glial cells.

The protein resides in the nucleus. It is found in the secreted. It localises to the mitochondrion membrane. Its function is as follows. Plays an essential role in mitochondrial ribosome biogenesis. As a component of a functional protein-RNA module, consisting of RCC1L, NGRN, RPUSD3, RPUSD4, TRUB2, FASTKD2 and 16S mitochondrial ribosomal RNA (16S mt-rRNA), controls 16S mt-rRNA abundance and is required for intra-mitochondrial translation of core subunits of the oxidative phosphorylation system. The protein is Neugrin of Homo sapiens (Human).